The sequence spans 206 residues: Threonine efflux protein (206 aa).

A helical transmembrane segment spans residues 1–21 (MMMLFFTVAMVHIVALMSPGP). The Periplasmic segment spans residues 22-43 (DFFFVSQTAVSRSRKEAMMGVL). The chain crosses the membrane as a helical span at residues 44–64 (GITCGVMVWAGVALLGLHLII). Residues 65-66 (EK) lie on the Cytoplasmic side of the membrane. The chain crosses the membrane as a helical span at residues 67 to 87 (MAWLHTIIMVGGGLYLCWMGY). Over 88 to 149 (QMLRGALKKQ…VGDNVGAAAR (62 aa)) the chain is Periplasmic. A helical membrane pass occupies residues 150 to 173 (WGIFALITLETLAWFTVVASLFAL). Residues 174 to 206 (PKMRRGYQRLAKWIDGFAGALFAGFGIHLIISR) are Cytoplasmic-facing.

This sequence belongs to the Rht family.

Its subcellular location is the cell inner membrane. In terms of biological role, conducts the efflux of threonine. The sequence is that of Threonine efflux protein (rhtC) from Salmonella typhimurium (strain LT2 / SGSC1412 / ATCC 700720).